The chain runs to 252 residues: Imidazole glycerol phosphate synthase subunit HisF (252 aa).

Catalysis depends on residues Asp-11 and Asp-130.

The protein belongs to the HisA/HisF family. As to quaternary structure, heterodimer of HisH and HisF.

It is found in the cytoplasm. It carries out the reaction 5-[(5-phospho-1-deoxy-D-ribulos-1-ylimino)methylamino]-1-(5-phospho-beta-D-ribosyl)imidazole-4-carboxamide + L-glutamine = D-erythro-1-(imidazol-4-yl)glycerol 3-phosphate + 5-amino-1-(5-phospho-beta-D-ribosyl)imidazole-4-carboxamide + L-glutamate + H(+). It functions in the pathway amino-acid biosynthesis; L-histidine biosynthesis; L-histidine from 5-phospho-alpha-D-ribose 1-diphosphate: step 5/9. IGPS catalyzes the conversion of PRFAR and glutamine to IGP, AICAR and glutamate. The HisF subunit catalyzes the cyclization activity that produces IGP and AICAR from PRFAR using the ammonia provided by the HisH subunit. This chain is Imidazole glycerol phosphate synthase subunit HisF, found in Staphylococcus aureus (strain Mu3 / ATCC 700698).